Here is a 468-residue protein sequence, read N- to C-terminus: uncharacterized protein (468 aa).

The TRAM domain maps to 3–61 (TFANGMTLDVTVDALAPGGKAVCRHEGRVIFVDRGLPGQQLHVRLTTVRKRFAEAECLA). Positions 74, 80, 83, and 162 each coordinate [4Fe-4S] cluster. S-adenosyl-L-methionine contacts are provided by Gln288, Tyr317, Glu338, and Asp389. Cys416 serves as the catalytic Nucleophile.

This sequence belongs to the class I-like SAM-binding methyltransferase superfamily. RNA M5U methyltransferase family.

This is an uncharacterized protein from Nitratidesulfovibrio vulgaris (strain ATCC 29579 / DSM 644 / CCUG 34227 / NCIMB 8303 / VKM B-1760 / Hildenborough) (Desulfovibrio vulgaris).